A 284-amino-acid polypeptide reads, in one-letter code: RAD52 motif-containing protein 1 (284 aa).

Residues 1–92 (MAELVPFAVP…KQLFQKSPVK (92 aa)) form a necessary for nuclear localization and for nucleolar accumulation in response to heat shock region. The RRM domain maps to 15-98 (KTLLVWELSS…SPVKVRLGTR (84 aa)). The tract at residues 90–133 (PVKVRLGTRHKAVQHQALALNSSRCQELANYYFGFNGWSKRIIK) is necessary for nuclear and nucleolar localization.

In terms of assembly, homodimer.

The protein resides in the nucleus. It localises to the cytoplasm. The protein localises to the nucleolus. Its subcellular location is the cajal body. It is found in the PML body. May confer resistance to the antitumor agent cisplatin. Binds to DNA and RNA. This is RAD52 motif-containing protein 1 (RDM1) from Macaca fascicularis (Crab-eating macaque).